The sequence spans 626 residues: Procollagen galactosyltransferase 2 (626 aa).

A signal peptide spans 1–27; the sequence is MAARPAATLAWSLLLLSSALLREGCRA. Residues Asn-97, Asn-185, Asn-382, and Asn-580 are each glycosylated (N-linked (GlcNAc...) asparagine). A disordered region spans residues 604–626; the sequence is NAKNTEALPPPTSLDTVPSRDEL. A Prevents secretion from ER motif is present at residues 623–626; sequence RDEL.

This sequence belongs to the glycosyltransferase 25 family. Expressed in brain and skeletal muscle.

Its subcellular location is the endoplasmic reticulum lumen. The catalysed reaction is (5R)-5-hydroxy-L-lysyl-[collagen] + UDP-alpha-D-galactose = (5R)-5-O-(beta-D-galactosyl)-5-hydroxy-L-lysyl-[collagen] + UDP + H(+). Functionally, beta-galactosyltransferase that transfers beta-galactose to hydroxylysine residues of collagen. This Homo sapiens (Human) protein is Procollagen galactosyltransferase 2 (COLGALT2).